A 241-amino-acid polypeptide reads, in one-letter code: Uridylate kinase (241 aa).

ATP contacts are provided by residues 10–13 (KLSG), glycine 53, and arginine 57. Residues aspartate 72 and 133 to 140 (AGSPYFST) contribute to the UMP site. ATP-binding residues include asparagine 161, tyrosine 167, and aspartate 170.

This sequence belongs to the UMP kinase family. In terms of assembly, homohexamer.

The protein resides in the cytoplasm. The enzyme catalyses UMP + ATP = UDP + ADP. It participates in pyrimidine metabolism; CTP biosynthesis via de novo pathway; UDP from UMP (UMPK route): step 1/1. Inhibited by UTP. Catalyzes the reversible phosphorylation of UMP to UDP. In Aster yellows witches'-broom phytoplasma (strain AYWB), this protein is Uridylate kinase.